Here is a 325-residue protein sequence, read N- to C-terminus: Dehydrogenase/reductase SDR family member 7B (325 aa).

At 1-17 the chain is on the cytoplasmic side; that stretch reads MVSAATRKSLLRARVMD. The helical; Signal-anchor for type II membrane protein transmembrane segment at 18–38 threads the bilayer; that stretch reads FITSTAILPLLLGCVGLFSLF. The Lumenal segment spans residues 39 to 325; that stretch reads KLLQWLRMRA…ARKERKSKHS (287 aa). The NAD(+) site is built by Ser-62 and Leu-64. Ser-194 is a binding site for substrate. NAD(+)-binding residues include Tyr-207, Lys-211, and Thr-242. Catalysis depends on Tyr-207, which acts as the Proton acceptor.

This sequence belongs to the short-chain dehydrogenases/reductases (SDR) family.

The protein resides in the endoplasmic reticulum membrane. Putative oxidoreductase. This is Dehydrogenase/reductase SDR family member 7B (DHRS7B) from Bos taurus (Bovine).